The primary structure comprises 529 residues: Glycylpeptide N-tetradecanoyltransferase (529 aa).

A compositionally biased stretch (polar residues) spans 1-10 (MSEQEGNQSE). The interval 1–65 (MSEQEGNQSE…ANPATKLTPS (65 aa)) is disordered. The span at 11-23 (HQSEHVGESEGKL) shows a compositional bias: basic and acidic residues. Residues 26–40 (ETPTTSQSTNASTGT) are compositionally biased toward polar residues. Residues 118–121 (FKFW), 252–254 (LCV), and 260–264 (SKRLT) contribute to the tetradecanoyl-CoA site. Val-529 serves as the catalytic Proton acceptor; via carboxylate.

This sequence belongs to the NMT family. In terms of assembly, monomer.

Its subcellular location is the cytoplasm. It carries out the reaction N-terminal glycyl-[protein] + tetradecanoyl-CoA = N-tetradecanoylglycyl-[protein] + CoA + H(+). Adds a myristoyl group to the N-terminal glycine residue of certain cellular proteins. In Ajellomyces capsulatus (Darling's disease fungus), this protein is Glycylpeptide N-tetradecanoyltransferase.